We begin with the raw amino-acid sequence, 276 residues long: 4-deoxy-L-threo-5-hexosulose-uronate ketol-isomerase 1 (276 aa).

The Zn(2+) site is built by H194, H196, E201, and H243.

This sequence belongs to the KduI family. Requires Zn(2+) as cofactor.

The catalysed reaction is 5-dehydro-4-deoxy-D-glucuronate = 3-deoxy-D-glycero-2,5-hexodiulosonate. The protein operates within glycan metabolism; pectin degradation; 2-dehydro-3-deoxy-D-gluconate from pectin: step 4/5. Functionally, catalyzes the isomerization of 5-dehydro-4-deoxy-D-glucuronate to 3-deoxy-D-glycero-2,5-hexodiulosonate. The chain is 4-deoxy-L-threo-5-hexosulose-uronate ketol-isomerase 1 (kduI1) from Enterococcus faecalis (strain ATCC 700802 / V583).